Consider the following 397-residue polypeptide: Elongation factor Tu (397 aa).

Residues 10–207 (KPHVNVGTIG…TLDSYIPEPV (198 aa)) form the tr-type G domain. The G1 stretch occupies residues 19–26 (GHVDHGKT). 19 to 26 (GHVDHGKT) is a GTP binding site. Threonine 26 serves as a coordination point for Mg(2+). A G2 region spans residues 60–64 (GITIN). Tyrosine 77 bears the Phosphotyrosine mark. The interval 81–84 (DCPG) is G3. Residue 81–85 (DCPGH) coordinates GTP. A Phosphotyrosine modification is found at tyrosine 88. Position 136 to 139 (136 to 139 (NKAD)) interacts with GTP. A G4 region spans residues 136–139 (NKAD). A G5 region spans residues 174-176 (SAL).

The protein belongs to the TRAFAC class translation factor GTPase superfamily. Classic translation factor GTPase family. EF-Tu/EF-1A subfamily. In terms of assembly, monomer.

The protein resides in the cytoplasm. It carries out the reaction GTP + H2O = GDP + phosphate + H(+). Functionally, GTP hydrolase that promotes the GTP-dependent binding of aminoacyl-tRNA to the A-site of ribosomes during protein biosynthesis. This is Elongation factor Tu from Pseudomonas aeruginosa (strain UCBPP-PA14).